Consider the following 333-residue polypeptide: Glutamyl endopeptidase (333 aa).

A signal peptide spans 1–29 (MKGKFLKVSSLFVATLTTATLVSSPAANA). A propeptide spanning residues 30–68 (LSSKAMDNHPQQSQSSKQQTPKIQKGGNLKPLEQREHAN) is cleaved from the precursor. The segment at 33–61 (KAMDNHPQQSQSSKQQTPKIQKGGNLKPL) is disordered. Residues 40 to 54 (QQSQSSKQQTPKIQK) show a composition bias toward low complexity. Catalysis depends on charge relay system residues His-119, Asp-161, and Ser-237. Residues 283–333 (FANDDQPNNPDNPDNPNNPDNPNNPDNPNNPNNPDNPDNGDNNNSDNPDAA) form a disordered region. The segment covering 286 to 333 (DDQPNNPDNPDNPNNPDNPNNPDNPNNPNNPDNPDNGDNNNSDNPDAA) has biased composition (low complexity). 11 repeat units span residues 289 to 291 (PNN), 292 to 294 (PDN), 295 to 297 (PDN), 298 to 300 (PNN), 301 to 303 (PDN), 304 to 306 (PNN), 307 to 309 (PDN), 310 to 312 (PNN), 313 to 315 (PNN), 316 to 318 (PDN), and 319 to 321 (PDN). Residues 289–321 (PNNPDNPDNPNNPDNPNNPDNPNNPNNPDNPDN) form an 11 X 3 AA repeats of P-[DN]-N region.

It belongs to the peptidase S1B family. In terms of processing, proteolytically cleaved by aureolysin (aur). This cleavage leads to the activation of SspA.

The protein localises to the secreted. The catalysed reaction is Preferential cleavage: Glu-|-Xaa, Asp-|-Xaa.. Its function is as follows. Preferentially cleaves peptide bonds on the carboxyl-terminal side of aspartate and glutamate. Along with other extracellular proteases it is involved in colonization and infection of human tissues. Required for proteolytic maturation of thiol protease SspB and inactivation of SspC, an inhibitor of SspB. It is the most important protease for degradation of fibronectin-binding protein (FnBP) and surface protein A, which are involved in adherence to host cells. May also protect bacteria against host defense mechanism by cleaving the immunoglobulin classes IgG, IgA and IgM. May be involved in the stability of secreted lipases. This Staphylococcus aureus (strain MSSA476) protein is Glutamyl endopeptidase (sspA).